The chain runs to 158 residues: 2-C-methyl-D-erythritol 2,4-cyclodiphosphate synthase (158 aa).

Residues Asp8 and His10 each coordinate a divalent metal cation. 4-CDP-2-C-methyl-D-erythritol 2-phosphate contacts are provided by residues 8 to 10 and 34 to 35; these read DVH and HS. His42 is an a divalent metal cation binding site. Residues 56 to 58, 61 to 65, 100 to 106, 132 to 135, Phe139, and Arg142 each bind 4-CDP-2-C-methyl-D-erythritol 2-phosphate; these read DIG, FPDTD, AQAPKMA, and TTSE.

It belongs to the IspF family. In terms of assembly, homotrimer. The cofactor is a divalent metal cation.

It carries out the reaction 4-CDP-2-C-methyl-D-erythritol 2-phosphate = 2-C-methyl-D-erythritol 2,4-cyclic diphosphate + CMP. The protein operates within isoprenoid biosynthesis; isopentenyl diphosphate biosynthesis via DXP pathway; isopentenyl diphosphate from 1-deoxy-D-xylulose 5-phosphate: step 4/6. Involved in the biosynthesis of isopentenyl diphosphate (IPP) and dimethylallyl diphosphate (DMAPP), two major building blocks of isoprenoid compounds. Catalyzes the conversion of 4-diphosphocytidyl-2-C-methyl-D-erythritol 2-phosphate (CDP-ME2P) to 2-C-methyl-D-erythritol 2,4-cyclodiphosphate (ME-CPP) with a corresponding release of cytidine 5-monophosphate (CMP). The sequence is that of 2-C-methyl-D-erythritol 2,4-cyclodiphosphate synthase from Aliivibrio fischeri (strain ATCC 700601 / ES114) (Vibrio fischeri).